The sequence spans 337 residues: Phosphoribosylformylglycinamidine cyclo-ligase (337 aa).

It belongs to the AIR synthase family.

It localises to the cytoplasm. It carries out the reaction 2-formamido-N(1)-(5-O-phospho-beta-D-ribosyl)acetamidine + ATP = 5-amino-1-(5-phospho-beta-D-ribosyl)imidazole + ADP + phosphate + H(+). Its pathway is purine metabolism; IMP biosynthesis via de novo pathway; 5-amino-1-(5-phospho-D-ribosyl)imidazole from N(2)-formyl-N(1)-(5-phospho-D-ribosyl)glycinamide: step 2/2. In Gloeobacter violaceus (strain ATCC 29082 / PCC 7421), this protein is Phosphoribosylformylglycinamidine cyclo-ligase.